The sequence spans 540 residues: Amino acid transporter AVT1B (540 aa).

Residues 1–11 (MNHSTSDQSLY) show a composition bias toward polar residues. The disordered stretch occupies residues 1 to 55 (MNHSTSDQSLYIESDDGDDERKHLSDDEDDDGTLSDTSDAYNQNQHHLSKASPYS). 11 helical membrane-spanning segments follow: residues 155 to 175 (AVLN…PYAV), 180 to 200 (WLGL…GLLL), 227 to 247 (ILVS…YIIL), 273 to 293 (LFAL…DLSV), 297 to 317 (ISAG…WVGL), 332 to 352 (LATL…HGVF), 367 to 387 (AVLL…AVMG), 412 to 432 (IALW…LSPV), 452 to 474 (IAIR…FFGL), 478 to 500 (LIGS…LSIL), and 511 to 531 (ICIL…YSAL).

The protein belongs to the amino acid/polyamine transporter 2 family. Amino acid/auxin permease (AAAP) (TC 2.A.18.5) subfamily.

The protein resides in the membrane. In Arabidopsis thaliana (Mouse-ear cress), this protein is Amino acid transporter AVT1B.